The chain runs to 515 residues: Histidine ammonia-lyase (515 aa).

A cross-link (5-imidazolinone (Ala-Gly)) is located at residues Ala-145–Gly-147. Position 146 is a 2,3-didehydroalanine (Ser) (Ser-146).

This sequence belongs to the PAL/histidase family. Contains an active site 4-methylidene-imidazol-5-one (MIO), which is formed autocatalytically by cyclization and dehydration of residues Ala-Ser-Gly.

It localises to the cytoplasm. The catalysed reaction is L-histidine = trans-urocanate + NH4(+). It functions in the pathway amino-acid degradation; L-histidine degradation into L-glutamate; N-formimidoyl-L-glutamate from L-histidine: step 1/3. This is Histidine ammonia-lyase from Gluconacetobacter diazotrophicus (strain ATCC 49037 / DSM 5601 / CCUG 37298 / CIP 103539 / LMG 7603 / PAl5).